The sequence spans 653 residues: Phospholipid-transporting ATPase VD (653 aa).

Topologically, residues 1–375 are cytoplasmic; sequence MACNLCYEAE…GHWCYTRLSN (375 aa). ATP contacts are provided by residues Glu-14, Phe-56, Lys-80, Arg-124, Thr-204, Gly-205, Asp-206, 259-266, Arg-293, and Lys-299; that span reads GLIITGKT. Asp-319 serves as a coordination point for Mg(2+). Residues Asn-322 and Asp-323 each coordinate ATP. A Mg(2+)-binding site is contributed by Asp-323. Residues 376–396 form a helical membrane-spanning segment; that stretch reads MILYFFYKNVAYVNLLFWYQF. Topologically, residues 397–407 are exoplasmic loop; the sequence is FCGFSGTSMTD. Residues 408-428 form a helical membrane-spanning segment; the sequence is YWVLIFFNLLFTSAPPVIYGV. Residues 429–458 are Cytoplasmic-facing; that stretch reads LEKDVSAETLMQLPELYKSGQKSEAYLPHT. Residues 459–480 traverse the membrane as a helical segment; sequence FWITLLDAFYQSLVCFFVPYFT. At 481 to 487 the chain is on the exoplasmic loop side; that stretch reads YQGSDID. The chain crosses the membrane as a helical span at residues 488–510; the sequence is IFAFGNPLNTAALFIILLHLIIE. The Cytoplasmic portion of the chain corresponds to 511–516; it reads SKSLTW. The helical transmembrane segment at 517-537 threads the bilayer; the sequence is IHMLVITGSILSYFLFAIVFG. Topologically, residues 538 to 555 are exoplasmic loop; it reads AMCVTCNPPSNPYWIMQE. The chain crosses the membrane as a helical span at residues 556-580; it reads HVLDPVFYLVCILTTCIALLPRFVY. Over 581–653 the chain is Cytoplasmic; sequence RGAGKMNQVT…AFEMARPCKD (73 aa).

The protein belongs to the cation transport ATPase (P-type) (TC 3.A.3) family. Type IV subfamily. As to quaternary structure, component of a P4-ATPase flippase complex which consists of a catalytic alpha subunit ATP10A and an accessory beta subunit TMEM30A. Mg(2+) is required as a cofactor. Post-translationally, autophosphorylated at the conserved aspartate of the P-type ATPase signature sequence.

It localises to the cell membrane. Its subcellular location is the endoplasmic reticulum membrane. It carries out the reaction ATP + H2O + phospholipidSide 1 = ADP + phosphate + phospholipidSide 2.. The enzyme catalyses a beta-D-glucosyl-(1&lt;-&gt;1')-N-acylsphing-4-enine(out) + ATP + H2O = a beta-D-glucosyl-(1&lt;-&gt;1')-N-acylsphing-4-enine(in) + ADP + phosphate + H(+). Its function is as follows. Catalytic component of a P4-ATPase flippase complex, which catalyzes the hydrolysis of ATP coupled to the transport of glucosylceramide (GlcCer) from the outer to the inner leaflet of the plasma membrane. This is Phospholipid-transporting ATPase VD (ATP10D) from Macaca fascicularis (Crab-eating macaque).